Consider the following 428-residue polypeptide: Dihydroorotase (428 aa).

Histidine 59 and histidine 61 together coordinate Zn(2+). Substrate contacts are provided by residues 61-63 and asparagine 93; that span reads HLR. Zn(2+) contacts are provided by aspartate 151, histidine 178, and histidine 231. Asparagine 277 contacts substrate. Residue aspartate 304 participates in Zn(2+) binding. Aspartate 304 is a catalytic residue. Substrate is bound by residues histidine 308 and 322-323; that span reads FG.

Belongs to the metallo-dependent hydrolases superfamily. DHOase family. Class I DHOase subfamily. Zn(2+) is required as a cofactor.

It carries out the reaction (S)-dihydroorotate + H2O = N-carbamoyl-L-aspartate + H(+). The protein operates within pyrimidine metabolism; UMP biosynthesis via de novo pathway; (S)-dihydroorotate from bicarbonate: step 3/3. In terms of biological role, catalyzes the reversible cyclization of carbamoyl aspartate to dihydroorotate. This chain is Dihydroorotase, found in Halalkalibacterium halodurans (strain ATCC BAA-125 / DSM 18197 / FERM 7344 / JCM 9153 / C-125) (Bacillus halodurans).